The following is a 169-amino-acid chain: NADH-quinone oxidoreductase subunit B (169 aa).

The [4Fe-4S] cluster site is built by Cys-42, Cys-43, Cys-107, and Cys-136.

It belongs to the complex I 20 kDa subunit family. NDH-1 is composed of 14 different subunits. Subunits NuoB, C, D, E, F, and G constitute the peripheral sector of the complex. [4Fe-4S] cluster serves as cofactor.

It localises to the cell inner membrane. The enzyme catalyses a quinone + NADH + 5 H(+)(in) = a quinol + NAD(+) + 4 H(+)(out). NDH-1 shuttles electrons from NADH, via FMN and iron-sulfur (Fe-S) centers, to quinones in the respiratory chain. The immediate electron acceptor for the enzyme in this species is believed to be ubiquinone. Couples the redox reaction to proton translocation (for every two electrons transferred, four hydrogen ions are translocated across the cytoplasmic membrane), and thus conserves the redox energy in a proton gradient. The sequence is that of NADH-quinone oxidoreductase subunit B from Sulfurimonas denitrificans (strain ATCC 33889 / DSM 1251) (Thiomicrospira denitrificans (strain ATCC 33889 / DSM 1251)).